Consider the following 509-residue polypeptide: DEAD-box ATP-dependent RNA helicase CshA (509 aa).

Positions 2 to 30 (QNFKELGISDKTVQTLEAMGFKEPTPIQK) match the Q motif motif. Residues 33–203 (IPYALEGDDI…QQFMKAPKII (171 aa)) enclose the Helicase ATP-binding domain. Position 46-53 (46-53 (AQTGTGKT)) interacts with ATP. A DEAD box motif is present at residues 150-153 (DEAD). The 162-residue stretch at 214 to 375 (QIDEYYTIVK…LRPPHRKEVL (162 aa)) folds into the Helicase C-terminal domain. Composition is skewed to basic residues over residues 440–459 (ARKN…KRGN) and 467–482 (RRSK…KKNQ). The disordered stretch occupies residues 440 to 509 (ARKNRSSKGG…KGRTFADHQK (70 aa)). Over residues 483–492 (KKFDRRDKQQ) the composition is skewed to basic and acidic residues.

It belongs to the DEAD box helicase family. CshA subfamily. Oligomerizes, may be a member of the RNA degradosome.

The protein resides in the cytoplasm. The enzyme catalyses ATP + H2O = ADP + phosphate + H(+). DEAD-box RNA helicase possibly involved in RNA degradation. Unwinds dsRNA in both 5'- and 3'-directions, has RNA-dependent ATPase activity. This is DEAD-box ATP-dependent RNA helicase CshA from Staphylococcus epidermidis (strain ATCC 12228 / FDA PCI 1200).